A 197-amino-acid chain; its full sequence is Nucleoside triphosphate pyrophosphatase (197 aa).

Catalysis depends on Asp74, which acts as the Proton acceptor.

The protein belongs to the Maf family. A divalent metal cation is required as a cofactor.

It is found in the cytoplasm. The catalysed reaction is a ribonucleoside 5'-triphosphate + H2O = a ribonucleoside 5'-phosphate + diphosphate + H(+). It catalyses the reaction a 2'-deoxyribonucleoside 5'-triphosphate + H2O = a 2'-deoxyribonucleoside 5'-phosphate + diphosphate + H(+). Its function is as follows. Nucleoside triphosphate pyrophosphatase. May have a dual role in cell division arrest and in preventing the incorporation of modified nucleotides into cellular nucleic acids. The chain is Nucleoside triphosphate pyrophosphatase from Granulibacter bethesdensis (strain ATCC BAA-1260 / CGDNIH1).